Here is a 224-residue protein sequence, read N- to C-terminus: Ribose-5-phosphate isomerase A 2 (224 aa).

Substrate is bound by residues 27-30, 83-86, and 96-99; these read SGST, DGTD, and KGGG. Glutamate 105 functions as the Proton acceptor in the catalytic mechanism. Lysine 123 contacts substrate.

Belongs to the ribose 5-phosphate isomerase family. As to quaternary structure, homodimer.

It catalyses the reaction aldehydo-D-ribose 5-phosphate = D-ribulose 5-phosphate. It participates in carbohydrate degradation; pentose phosphate pathway; D-ribose 5-phosphate from D-ribulose 5-phosphate (non-oxidative stage): step 1/1. Catalyzes the reversible conversion of ribose-5-phosphate to ribulose 5-phosphate. This Oceanobacillus iheyensis (strain DSM 14371 / CIP 107618 / JCM 11309 / KCTC 3954 / HTE831) protein is Ribose-5-phosphate isomerase A 2.